Here is a 521-residue protein sequence, read N- to C-terminus: Peroxisomal membrane protein PEX23 (521 aa).

Residues 1–26 (MPTDPNSNPVSKAGLTPSSINSNISE) form a disordered region. Asparagine 23 and asparagine 53 each carry an N-linked (GlcNAc...) asparagine glycan. 2 helical membrane passes run 111 to 128 (SYIS…ILYF) and 133 to 150 (IYLG…YSIF). Asparagine 189 carries N-linked (GlcNAc...) asparagine glycosylation. Residues 198-217 (LLFTSIFLSPGYILVCYLLF) form a helical membrane-spanning segment. N-linked (GlcNAc...) asparagine glycosylation occurs at asparagine 279. A disordered region spans residues 425-446 (VSPGDDSSTDSASLPHSASETV). Over residues 429 to 446 (DDSSTDSASLPHSASETV) the composition is skewed to polar residues. N-linked (GlcNAc...) asparagine glycans are attached at residues asparagine 463 and asparagine 467. The disordered stretch occupies residues 465–486 (SGNITTSAETAPDSAGTAKKRK).

This sequence belongs to the PEX28-32 family. PEX32 subfamily.

Its subcellular location is the endoplasmic reticulum membrane. Functionally, with PEX29, contributes to the formation of endoplasmic reticulum-mitochondria junctions which are important for mitochondrial function. Involved in lipid dropplets formation. The polypeptide is Peroxisomal membrane protein PEX23 (Ogataea parapolymorpha (strain ATCC 26012 / BCRC 20466 / JCM 22074 / NRRL Y-7560 / DL-1) (Yeast)).